Consider the following 157-residue polypeptide: Crossover junction endodeoxyribonuclease RuvC (157 aa).

Residues Asp7, Glu67, and Asp140 contribute to the active site. Positions 7, 67, and 140 each coordinate Mg(2+).

This sequence belongs to the RuvC family. In terms of assembly, homodimer which binds Holliday junction (HJ) DNA. The HJ becomes 2-fold symmetrical on binding to RuvC with unstacked arms; it has a different conformation from HJ DNA in complex with RuvA. In the full resolvosome a probable DNA-RuvA(4)-RuvB(12)-RuvC(2) complex forms which resolves the HJ. It depends on Mg(2+) as a cofactor.

Its subcellular location is the cytoplasm. The enzyme catalyses Endonucleolytic cleavage at a junction such as a reciprocal single-stranded crossover between two homologous DNA duplexes (Holliday junction).. The RuvA-RuvB-RuvC complex processes Holliday junction (HJ) DNA during genetic recombination and DNA repair. Endonuclease that resolves HJ intermediates. Cleaves cruciform DNA by making single-stranded nicks across the HJ at symmetrical positions within the homologous arms, yielding a 5'-phosphate and a 3'-hydroxyl group; requires a central core of homology in the junction. The consensus cleavage sequence is 5'-(A/T)TT(C/G)-3'. Cleavage occurs on the 3'-side of the TT dinucleotide at the point of strand exchange. HJ branch migration catalyzed by RuvA-RuvB allows RuvC to scan DNA until it finds its consensus sequence, where it cleaves and resolves the cruciform DNA. This is Crossover junction endodeoxyribonuclease RuvC from Rickettsia africae (strain ESF-5).